A 161-amino-acid polypeptide reads, in one-letter code: Insulin-like growth factor 1, juvenile form (161 aa).

The b stretch occupies residues 45–73 (GPETLCGAELVDTLQFVCGDRGFYFSKPT). 3 disulfides stabilise this stretch: cysteine 50/cysteine 92, cysteine 62/cysteine 105, and cysteine 91/cysteine 96. A c region spans residues 74-85 (GYGPSSRRSHNR). The tract at residues 86 to 106 (GIVDECCFQSCELRRLEMYCA) is a. The segment at 107–114 (PVKPGKTP) is d. The tract at residues 111–161 (GKTPRSVRAQRHTDSPRTAKKPLPGQSHSSYKEVHQKNSSRGNTGGRNYRI) is disordered. Positions 115-161 (RSVRAQRHTDSPRTAKKPLPGQSHSSYKEVHQKNSSRGNTGGRNYRI) are cleaved as a propeptide — e peptide.

This sequence belongs to the insulin family.

It is found in the secreted. Functionally, the insulin-like growth factors, isolated from plasma, are structurally and functionally related to insulin but have a much higher growth-promoting activity. Acts as a ligand for IGF1R. Binds to the alpha subunit of IGF1R, leading to the activation of the intrinsic tyrosine kinase activity which autophosphorylates tyrosine residues in the beta subunit thus initiatiating a cascade of down-stream signaling events leading to activation of the PI3K-AKT/PKB and the Ras-MAPK pathways. Binds to integrins. Its binding to integrins and subsequent ternary complex formation with integrins and IGFR1 are essential for IGF1 signaling. In Cyprinus carpio (Common carp), this protein is Insulin-like growth factor 1, juvenile form.